Here is a 703-residue protein sequence, read N- to C-terminus: Prolyl 3-hydroxylase 2 (703 aa).

An N-terminal signal peptide occupies residues 1–21 (MRESTWVSLLLLLLLPAPQRG). The disordered stretch occupies residues 18-40 (PQRGGPQDGRGSPEPEPERGPLQ). TPR repeat units follow at residues 42–75 (FDLLYASGVAAYYSGDYEGAVRDLEAALRSHRRL), 144–177 (RVPYNYLQRAYIKLNQLDKAMEAAHTFFMANPEH), 205–238 (HLESYNAGVKHYEADDFEAAIKYFEQALREYFNE), and 301–334 (PLHYDYLQFAYYRVGEYVKALECAKAYLMFHPDD). N-linked (GlcNAc...) asparagine glycans are attached at residues asparagine 444, asparagine 455, and asparagine 544. The 115-residue stretch at 552–666 (THMVCRTALS…RCAVALWFTL (115 aa)) folds into the Fe2OG dioxygenase domain. Residues histidine 575, aspartate 577, and histidine 647 each contribute to the Fe cation site. Arginine 657 is an active-site residue. A Prevents secretion from ER motif is present at residues 700–703 (KDEL).

The protein belongs to the leprecan family. Fe cation serves as cofactor. Requires L-ascorbate as cofactor. In terms of tissue distribution, detected at low levels in cartilage.

It is found in the endoplasmic reticulum. The protein resides in the sarcoplasmic reticulum. The protein localises to the golgi apparatus. The enzyme catalyses L-prolyl-[collagen] + 2-oxoglutarate + O2 = trans-3-hydroxy-L-prolyl-[collagen] + succinate + CO2. Prolyl 3-hydroxylase that catalyzes the post-translational formation of 3-hydroxyproline on collagens. Contributes to proline 3-hydroxylation of collagen COL4A1 and COL1A1 in tendons, the eye sclera and in the eye lens capsule. Has high activity with the type IV collagen COL4A1, and lower activity with COL1A1. Catalyzes hydroxylation of the first Pro in Gly-Pro-Hyp sequences where Hyp is 4-hydroxyproline. Has no activity on substrates that lack 4-hydroxyproline in the third position. The sequence is that of Prolyl 3-hydroxylase 2 from Rattus norvegicus (Rat).